The chain runs to 276 residues: NAD kinase (276 aa).

Asp61 serves as the catalytic Proton acceptor. Residues 61 to 62, 134 to 135, Arg145, Lys162, Asp164, Val172, 175 to 180, and Gln234 each bind NAD(+); these read DG, ND, and TAYSFS.

It belongs to the NAD kinase family. Requires a divalent metal cation as cofactor.

The protein localises to the cytoplasm. It carries out the reaction NAD(+) + ATP = ADP + NADP(+) + H(+). Involved in the regulation of the intracellular balance of NAD and NADP, and is a key enzyme in the biosynthesis of NADP. Catalyzes specifically the phosphorylation on 2'-hydroxyl of the adenosine moiety of NAD to yield NADP. In Clostridium perfringens (strain 13 / Type A), this protein is NAD kinase.